Reading from the N-terminus, the 294-residue chain is Nucleotide-binding protein Dde_1774 (294 aa).

Position 14–21 (glycine 14–serine 21) interacts with ATP. Residue aspartate 66–glutamine 69 participates in GTP binding.

This sequence belongs to the RapZ-like family.

Functionally, displays ATPase and GTPase activities. The sequence is that of Nucleotide-binding protein Dde_1774 from Oleidesulfovibrio alaskensis (strain ATCC BAA-1058 / DSM 17464 / G20) (Desulfovibrio alaskensis).